The primary structure comprises 151 residues: MEYQGQHGGHASSRADEHGNPAVTTGNAPTGMGAGHIQEPAREDKKTDGVLRRSGSSSSSSSSEDDGMGGRRKKGIKEKIKEKLPGGNKGNNQQQQQEHTTTTTGGAYGPQGHDTKIATGAHGGTAATTADAGGEKKGIVDKIKEKLPGQH.

The disordered stretch occupies residues 1 to 138 (MEYQGQHGGH…TADAGGEKKG (138 aa)). Basic and acidic residues predominate over residues 39-51 (EPAREDKKTDGVL). Composition is skewed to low complexity over residues 90-105 (GNNQ…TTTG) and 117-132 (IATG…TADA).

The protein belongs to the plant dehydrin family.

The polypeptide is Dehydrin Rab16D (RAB16D) (Oryza sativa subsp. indica (Rice)).